The following is a 396-amino-acid chain: MLPSLQESMDGDEKELESSEEGGSAEERRLEPPSSSHYCLYSYRGSRLAQQRGDSEDGSPSGTNAETPSGDDFSLSLADTNLPSEVEPELRSFIAKRLSRGAVFEGLGNVASVELKIPGYRVGCYYCLFQNEKLLPETVTIDSERNPSEYVVCFLGGSEKGLELFRLELDKYIQGLKNNMNCEARGLESHIKSYLSSWFEDVVCPIQRVVLLFQEKLTFLLHAALSYTPVEVKESDEKTKRDINRFLSVASLQGLIHEGTMTSLCMAMTEEQHKSVVIDCSSSQPQFCNAGSNRFCEDWMQAFLNGAKGGNPFLFRQVLENFKLKAIQDTNNLKRFIRQAEMNHYALFKCYMFLKNCGSGDILLKIVKVEHEEMPEAKNVIAVLEEFMKEALDQSF.

Positions 1-78 (MLPSLQESMD…SGDDFSLSLA (78 aa)) are disordered. Residues Ser8 and Ser18 each carry the phosphoserine modification. Residues 9–24 (MDGDEKELESSEEGGS) show a composition bias toward acidic residues. A compositionally biased stretch (polar residues) spans 58-67 (GSPSGTNAET).

Component of the complex WDR11 composed of C17orf75, FAM91A1 and WDR11; FAM91A1 and WDR11 are required for proper location of the complex. Interacts with TBC1D23; this interaction may be indirect and recruits TBC1D23 to AP-1-derived vesicles. As to expression, highly expressed in testis and also expressed in fetal testis.

The protein resides in the golgi apparatus. It is found in the trans-Golgi network. The protein localises to the cytoplasmic vesicle. Its function is as follows. As component of the WDR11 complex acts together with TBC1D23 to facilitate the golgin-mediated capture of vesicles generated using AP-1. May have a role in spermatogenesis. This is Protein Njmu-R1 (C17orf75) from Homo sapiens (Human).